The following is a 32-amino-acid chain: Cytochrome b6-f complex subunit 6 (32 aa).

Residues 6 to 26 (VFYIVFIALFFGIAVGIIFAI) form a helical membrane-spanning segment.

Belongs to the PetL family. As to quaternary structure, the 4 large subunits of the cytochrome b6-f complex are cytochrome b6, subunit IV (17 kDa polypeptide, PetD), cytochrome f and the Rieske protein, while the 4 small subunits are PetG, PetL, PetM and PetN. The complex functions as a dimer.

Its subcellular location is the cellular thylakoid membrane. Its function is as follows. Component of the cytochrome b6-f complex, which mediates electron transfer between photosystem II (PSII) and photosystem I (PSI), cyclic electron flow around PSI, and state transitions. PetL is important for photoautotrophic growth as well as for electron transfer efficiency and stability of the cytochrome b6-f complex. The polypeptide is Cytochrome b6-f complex subunit 6 (Mastigocladus laminosus (Fischerella sp.)).